Consider the following 618-residue polypeptide: Cytosolic Fe-S cluster assembly factor NAR1 (618 aa).

[4Fe-4S] cluster is bound by residues cysteine 20, cysteine 61, cysteine 64, cysteine 67, cysteine 212, cysteine 267, cysteine 471, and cysteine 475. Disordered stretches follow at residues 495 to 516 (TSSI…TPQE) and 530 to 560 (SADS…PESR).

Belongs to the NARF family.

Its function is as follows. Component of the cytosolic Fe/S protein assembly machinery. Required for maturation of extramitochondrial Fe/S proteins. May play a role in the transfer of pre-assembled Fe/S clusters to target apoproteins. The sequence is that of Cytosolic Fe-S cluster assembly factor NAR1 (NAR1) from Coccidioides immitis (strain RS) (Valley fever fungus).